The chain runs to 335 residues: Nuclear transcription factor Y subunit gamma (335 aa).

The protein belongs to the NFYC/HAP5 subunit family. In terms of assembly, heterotrimeric transcription factor composed of three components, NF-YA, NF-YB and NF-YC. NF-YB and NF-YC must interact and dimerize for NF-YA association and DNA binding.

It localises to the nucleus. In terms of biological role, component of the sequence-specific heterotrimeric transcription factor (NF-Y) which specifically recognizes a 5'-CCAAT-3' box motif found in the promoters of its target genes. NF-Y can function as both an activator and a repressor, depending on its interacting cofactors. The protein is Nuclear transcription factor Y subunit gamma (NFYC) of Pongo abelii (Sumatran orangutan).